A 73-amino-acid polypeptide reads, in one-letter code: Translation initiation factor IF-1 (73 aa).

One can recognise an S1-like domain in the interval 1–73 (MSEKEAGIEV…TRGRITYRDK (73 aa)).

Belongs to the IF-1 family. As to quaternary structure, component of the 30S ribosomal translation pre-initiation complex which assembles on the 30S ribosome in the order IF-2 and IF-3, IF-1 and N-formylmethionyl-tRNA(fMet); mRNA recruitment can occur at any time during PIC assembly.

Its subcellular location is the cytoplasm. Functionally, one of the essential components for the initiation of protein synthesis. Stabilizes the binding of IF-2 and IF-3 on the 30S subunit to which N-formylmethionyl-tRNA(fMet) subsequently binds. Helps modulate mRNA selection, yielding the 30S pre-initiation complex (PIC). Upon addition of the 50S ribosomal subunit IF-1, IF-2 and IF-3 are released leaving the mature 70S translation initiation complex. This Anaeromyxobacter sp. (strain Fw109-5) protein is Translation initiation factor IF-1.